The sequence spans 85 residues: Translation initiation factor IF-1 2 (85 aa).

The S1-like domain occupies 1–72; it reads MAKEELIEMH…SKGRITFRHI (72 aa).

Belongs to the IF-1 family. As to quaternary structure, component of the 30S ribosomal translation pre-initiation complex which assembles on the 30S ribosome in the order IF-2 and IF-3, IF-1 and N-formylmethionyl-tRNA(fMet); mRNA recruitment can occur at any time during PIC assembly.

It is found in the cytoplasm. One of the essential components for the initiation of protein synthesis. Stabilizes the binding of IF-2 and IF-3 on the 30S subunit to which N-formylmethionyl-tRNA(fMet) subsequently binds. Helps modulate mRNA selection, yielding the 30S pre-initiation complex (PIC). Upon addition of the 50S ribosomal subunit IF-1, IF-2 and IF-3 are released leaving the mature 70S translation initiation complex. The sequence is that of Translation initiation factor IF-1 2 from Polaromonas sp. (strain JS666 / ATCC BAA-500).